Reading from the N-terminus, the 687-residue chain is Putative mitochondrial carnitine O-acetyltransferase (687 aa).

Residue His346 is the Proton acceptor of the active site. 446–459 (GASHIKTVFKCSPD) serves as a coordination point for CoA. Residues Tyr481 and Thr494 each contribute to the (R)-carnitine site. Ser517 bears the Phosphoserine mark.

This sequence belongs to the carnitine/choline acetyltransferase family.

Its subcellular location is the mitochondrion inner membrane. The catalysed reaction is (R)-carnitine + acetyl-CoA = O-acetyl-(R)-carnitine + CoA. Involved in the transfer of acetyl-CoA into mitochondria. May also be involved in the metabolism of acetate and of ethanol. The protein is Putative mitochondrial carnitine O-acetyltransferase (YAT1) of Saccharomyces cerevisiae (strain ATCC 204508 / S288c) (Baker's yeast).